We begin with the raw amino-acid sequence, 349 residues long: Sphingolipid C4-hydroxylase SUR2 (349 aa).

The next 5 membrane-spanning stretches (helical) occupy residues 9-29 (AAGSFPLAFGLKTSFGFMHYA), 50-70 (VLALVAPVVAYWALSGIFHVI), 99-119 (FLEVILQHIIQTIVGLIFMHF), 148-168 (IYYGYMYGMSALKIFAGFLFV), and 209-229 (PVEGFLLDTLGTGIAMTLTHL). One can recognise a Fatty acid hydroxylase domain in the interval 162–297 (FAGFLFVDTW…FTFWDNLFQT (136 aa)).

Belongs to the sterol desaturase family.

The protein localises to the endoplasmic reticulum membrane. It carries out the reaction sphinganine + 2 Fe(II)-[cytochrome b5] + O2 + 2 H(+) = (4R)-hydroxysphinganine + 2 Fe(III)-[cytochrome b5] + H2O. It catalyses the reaction an N-acylsphinganine + 2 Fe(II)-[cytochrome b5] + O2 + 2 H(+) = an N-acyl-(4R)-4-hydroxysphinganine + 2 Fe(III)-[cytochrome b5] + H2O. The catalysed reaction is an N-acyleicosasphinganine + 2 Fe(II)-[cytochrome b5] + O2 + 2 H(+) = N-acyl-4-hydroxyeicosasphinganine + 2 Fe(III)-[cytochrome b5] + H2O. It functions in the pathway membrane lipid metabolism; sphingolipid biosynthesis. In terms of biological role, required for hydroxylation of C-4 in the sphingoid moiety of ceramide. Catalyzes the conversion of sphinganine to phytosphingosine in sphingolipid biosynthesis. Involved in the response to syringomycin. The protein is Sphingolipid C4-hydroxylase SUR2 (SUR2) of Saccharomyces cerevisiae (strain ATCC 204508 / S288c) (Baker's yeast).